The chain runs to 474 residues: tRNA-2-methylthio-N(6)-dimethylallyladenosine synthase (474 aa).

Positions 3–120 (KKLHIKTWGC…LPEMINSVRG (118 aa)) constitute an MTTase N-terminal domain. 6 residues coordinate [4Fe-4S] cluster: cysteine 12, cysteine 49, cysteine 83, cysteine 157, cysteine 161, and cysteine 164. A Radical SAM core domain is found at 143-375 (RAEGPTAFVS…QERINQQAMA (233 aa)). Residues 378 to 441 (RRMLGTTQRI…PNSLRGKVVR (64 aa)) enclose the TRAM domain.

It belongs to the methylthiotransferase family. MiaB subfamily. Monomer. [4Fe-4S] cluster serves as cofactor.

It localises to the cytoplasm. The enzyme catalyses N(6)-dimethylallyladenosine(37) in tRNA + (sulfur carrier)-SH + AH2 + 2 S-adenosyl-L-methionine = 2-methylsulfanyl-N(6)-dimethylallyladenosine(37) in tRNA + (sulfur carrier)-H + 5'-deoxyadenosine + L-methionine + A + S-adenosyl-L-homocysteine + 2 H(+). Catalyzes the methylthiolation of N6-(dimethylallyl)adenosine (i(6)A), leading to the formation of 2-methylthio-N6-(dimethylallyl)adenosine (ms(2)i(6)A) at position 37 in tRNAs that read codons beginning with uridine. This chain is tRNA-2-methylthio-N(6)-dimethylallyladenosine synthase, found in Shigella boydii serotype 18 (strain CDC 3083-94 / BS512).